The following is a 522-amino-acid chain: Peptide chain release factor 3 (522 aa).

One can recognise a tr-type G domain in the interval A10 to S277. GTP is bound by residues S19 to T26, D87 to H91, and N141 to D144.

This sequence belongs to the TRAFAC class translation factor GTPase superfamily. Classic translation factor GTPase family. PrfC subfamily.

It is found in the cytoplasm. Functionally, increases the formation of ribosomal termination complexes and stimulates activities of RF-1 and RF-2. It binds guanine nucleotides and has strong preference for UGA stop codons. It may interact directly with the ribosome. The stimulation of RF-1 and RF-2 is significantly reduced by GTP and GDP, but not by GMP. In Listeria welshimeri serovar 6b (strain ATCC 35897 / DSM 20650 / CCUG 15529 / CIP 8149 / NCTC 11857 / SLCC 5334 / V8), this protein is Peptide chain release factor 3.